The primary structure comprises 276 residues: 2-dehydro-3-deoxyphosphooctonate aldolase (276 aa).

Belongs to the KdsA family.

The protein resides in the cytoplasm. The enzyme catalyses D-arabinose 5-phosphate + phosphoenolpyruvate + H2O = 3-deoxy-alpha-D-manno-2-octulosonate-8-phosphate + phosphate. Its pathway is carbohydrate biosynthesis; 3-deoxy-D-manno-octulosonate biosynthesis; 3-deoxy-D-manno-octulosonate from D-ribulose 5-phosphate: step 2/3. It participates in bacterial outer membrane biogenesis; lipopolysaccharide biosynthesis. The protein is 2-dehydro-3-deoxyphosphooctonate aldolase of Xanthomonas oryzae pv. oryzae (strain MAFF 311018).